Consider the following 307-residue polypeptide: MSSIDLSTVRTFLLGLQERITHAIAEVDGQPFMTDHWQKEPGETLQGNGITKILEQGRVFERAGCGFSHVRGPRLPPSATQHRPELAGAAFEAMGVSLVFHPRNPYVPTVHMNVRMLAATPVGENCEPVCWFGGGMDLTPFYGFDEDAVHFHQVCKDSLKPFGDDKYPRFKQWCDEYFYLKHRQEQRGIGGVFFDDFQELGLAQSFAMMQSVGDSFLQAYLPIVERRKDSLFGERERDFQLYRRGRYVEFNLVWDRGTHFGLQSGGRTESILMSMPPLASWSYQRPNEAGSPEERLYKEFLVRRDWV.

Residue Ser97 coordinates substrate. A divalent metal cation-binding residues include His101 and His111. The active-site Proton donor is the His111. 113–115 (NVR) is a substrate binding site. His152 and His182 together coordinate a divalent metal cation. The segment at 247 to 282 (YVEFNLVWDRGTHFGLQSGGRTESILMSMPPLASWS) is important for dimerization. 265–267 (GGR) contacts substrate.

Belongs to the aerobic coproporphyrinogen-III oxidase family. Homodimer. A divalent metal cation serves as cofactor.

The protein resides in the cytoplasm. The enzyme catalyses coproporphyrinogen III + O2 + 2 H(+) = protoporphyrinogen IX + 2 CO2 + 2 H2O. Its pathway is porphyrin-containing compound metabolism; protoporphyrin-IX biosynthesis; protoporphyrinogen-IX from coproporphyrinogen-III (O2 route): step 1/1. In terms of biological role, involved in the heme biosynthesis. Catalyzes the aerobic oxidative decarboxylation of propionate groups of rings A and B of coproporphyrinogen-III to yield the vinyl groups in protoporphyrinogen-IX. This chain is Oxygen-dependent coproporphyrinogen-III oxidase, found in Polaromonas naphthalenivorans (strain CJ2).